The following is a 213-amino-acid chain: N-(5'-phosphoribosyl)anthranilate isomerase (213 aa).

It belongs to the TrpF family.

The catalysed reaction is N-(5-phospho-beta-D-ribosyl)anthranilate = 1-(2-carboxyphenylamino)-1-deoxy-D-ribulose 5-phosphate. It participates in amino-acid biosynthesis; L-tryptophan biosynthesis; L-tryptophan from chorismate: step 3/5. The protein is N-(5'-phosphoribosyl)anthranilate isomerase of Hahella chejuensis (strain KCTC 2396).